Consider the following 382-residue polypeptide: Dual-specificity RNA methyltransferase RlmN (382 aa).

The active-site Proton acceptor is Glu-96. A Radical SAM core domain is found at 102–342 (QGGRGTLCVS…VRTTRGEDID (241 aa)). Cysteines 109 and 345 form a disulfide. Cys-116, Cys-120, and Cys-123 together coordinate [4Fe-4S] cluster. S-adenosyl-L-methionine contacts are provided by residues 170 to 171 (GE), Ser-202, 224 to 226 (SLH), and Asn-302. Cys-345 (S-methylcysteine intermediate) is an active-site residue.

This sequence belongs to the radical SAM superfamily. RlmN family. [4Fe-4S] cluster is required as a cofactor.

The protein resides in the cytoplasm. It carries out the reaction adenosine(2503) in 23S rRNA + 2 reduced [2Fe-2S]-[ferredoxin] + 2 S-adenosyl-L-methionine = 2-methyladenosine(2503) in 23S rRNA + 5'-deoxyadenosine + L-methionine + 2 oxidized [2Fe-2S]-[ferredoxin] + S-adenosyl-L-homocysteine. It catalyses the reaction adenosine(37) in tRNA + 2 reduced [2Fe-2S]-[ferredoxin] + 2 S-adenosyl-L-methionine = 2-methyladenosine(37) in tRNA + 5'-deoxyadenosine + L-methionine + 2 oxidized [2Fe-2S]-[ferredoxin] + S-adenosyl-L-homocysteine. Specifically methylates position 2 of adenine 2503 in 23S rRNA and position 2 of adenine 37 in tRNAs. m2A2503 modification seems to play a crucial role in the proofreading step occurring at the peptidyl transferase center and thus would serve to optimize ribosomal fidelity. This chain is Dual-specificity RNA methyltransferase RlmN, found in Stutzerimonas stutzeri (strain A1501) (Pseudomonas stutzeri).